Here is a 662-residue protein sequence, read N- to C-terminus: MAAENEASQESALGAYSPVDYMSITSFPRLPEDEPAPAAPLRGRKDEDAFLGDPDTDPDSFLKSARLQRLPSSSSEMGSQDGSPLRETRKDPFSAAAAECSCRQDGLTVIVTACLTFATGVTVALVMQIYFGDPQIFQQGAVVTDASSCTALGMEVLSKQGSSVDAAVAAALCLGIVAPHSSGLGGGGVMLVHDIRRNESHLIDFRESAPGALREEALQRSWDTKPGLLVGVPGMVKGLHEAHQLYGRLPWSQVLAFAAAVAQDGFNVTHDLAHALAEQLPPNASDRFLDTFLPLGHPPLPGSLLRRPDLAEVLDILGTSGPAAFYNGGNLTLEMVAEAQHAGGVITEEDFSNYSALTEKPVCGVYRGHLVLSPPPPHTGPALISALNILEGFNLTSLVSREQALHWVAETLKIALALASRLGDPVYDSTITESMDDMLSKVEAANFRGHISDSQAAPAPLLPVYELDGAPTAAQVLVMGPDDFIVAMVSSLNRPFGSGLLTPSGILLNSQMLDFSWPNRTANHSAPSLENSVQPGKRPLSFLLPTVVRPAEGLCGTYLALGANGAARGLSGLTQVLLNVLTLNRNLSDSLARGRLHPDLQSNLLQVDSEFTEEEIEFLEARGHHVEKVDVLSWVHGSRRTNTFIIGVKDPRSPDAAGATIL.

Over 1–106 (MAAENEASQE…AAECSCRQDG (106 aa)) the chain is Cytoplasmic. Residues Ser17, Ser72, Ser79, and Ser83 each carry the phosphoserine modification. The tract at residues 26–90 (SFPRLPEDEP…DGSPLRETRK (65 aa)) is disordered. Residues 72–83 (SSSSEMGSQDGS) show a composition bias toward low complexity. A helical; Signal-anchor for type II membrane protein transmembrane segment spans residues 107–127 (LTVIVTACLTFATGVTVALVM). Residues 128–662 (QIYFGDPQIF…SPDAAGATIL (535 aa)) are Extracellular-facing. N-linked (GlcNAc...) asparagine glycosylation is found at Asn198, Asn267, Asn283, Asn330, Asn353, Asn394, Asn519, Asn523, and Asn586.

Belongs to the gamma-glutamyltransferase family. As to quaternary structure, heterodimer composed of the light and heavy chains. The active site is located in the light chain. Post-translationally, cleaved by autocatalysis into a large and a small subunit and the autocatalytic cleavage is essential to the functional activation of the enzyme.

It localises to the membrane. The enzyme catalyses an N-terminal (5-L-glutamyl)-[peptide] + an alpha-amino acid = 5-L-glutamyl amino acid + an N-terminal L-alpha-aminoacyl-[peptide]. The catalysed reaction is glutathione + H2O = L-cysteinylglycine + L-glutamate. It catalyses the reaction an S-substituted glutathione + H2O = an S-substituted L-cysteinylglycine + L-glutamate. It participates in sulfur metabolism; glutathione metabolism. In terms of biological role, hydrolyzes and transfers gamma-glutamyl moieties from glutathione and other gamma-glutamyl compounds to acceptors. The sequence is that of Glutathione hydrolase 7 from Mus musculus (Mouse).